We begin with the raw amino-acid sequence, 489 residues long: ATP synthase subunit beta, chloroplastic (489 aa).

170–177 (GGAGVGKT) contributes to the ATP binding site.

Belongs to the ATPase alpha/beta chains family. In terms of assembly, F-type ATPases have 2 components, CF(1) - the catalytic core - and CF(0) - the membrane proton channel. CF(1) has five subunits: alpha(3), beta(3), gamma(1), delta(1), epsilon(1). CF(0) has four main subunits: a(1), b(1), b'(1) and c(9-12).

Its subcellular location is the plastid. The protein resides in the chloroplast thylakoid membrane. The enzyme catalyses ATP + H2O + 4 H(+)(in) = ADP + phosphate + 5 H(+)(out). In terms of biological role, produces ATP from ADP in the presence of a proton gradient across the membrane. The catalytic sites are hosted primarily by the beta subunits. This Zygnema circumcarinatum (Green alga) protein is ATP synthase subunit beta, chloroplastic.